The primary structure comprises 317 residues: tRNA(Ile)-lysidine synthase (317 aa).

30–35 (SGGSDS) is an ATP binding site.

This sequence belongs to the tRNA(Ile)-lysidine synthase family.

It localises to the cytoplasm. The enzyme catalyses cytidine(34) in tRNA(Ile2) + L-lysine + ATP = lysidine(34) in tRNA(Ile2) + AMP + diphosphate + H(+). In terms of biological role, ligates lysine onto the cytidine present at position 34 of the AUA codon-specific tRNA(Ile) that contains the anticodon CAU, in an ATP-dependent manner. Cytidine is converted to lysidine, thus changing the amino acid specificity of the tRNA from methionine to isoleucine. This Chlamydia caviae (strain ATCC VR-813 / DSM 19441 / 03DC25 / GPIC) (Chlamydophila caviae) protein is tRNA(Ile)-lysidine synthase.